Consider the following 419-residue polypeptide: Ras association domain-containing protein 8 (419 aa).

The Ras-associating domain maps to 1-82 (MELKVWVDGV…VQLILRRTGP (82 aa)). A phosphoserine mark is found at Ser105 and Ser129. The residue at position 131 (Thr131) is a Phosphothreonine. A disordered region spans residues 372-399 (ASQADIETEAPFQSGSLKRPGSSRQLPS). Residues 382-399 (PFQSGSLKRPGSSRQLPS) show a composition bias toward polar residues. Ser387 bears the Phosphoserine mark.

This is Ras association domain-containing protein 8 (Rassf8) from Mus musculus (Mouse).